Here is a 205-residue protein sequence, read N- to C-terminus: Cytochrome c biogenesis ATP-binding export protein CcmA 2 (205 aa).

The region spanning leucine 2–leucine 205 is the ABC transporter domain. Glycine 34 to threonine 41 provides a ligand contact to ATP.

It belongs to the ABC transporter superfamily. CcmA exporter (TC 3.A.1.107) family. In terms of assembly, the complex is composed of two ATP-binding proteins (CcmA) and two transmembrane proteins (CcmB).

The protein localises to the cell inner membrane. It carries out the reaction heme b(in) + ATP + H2O = heme b(out) + ADP + phosphate + H(+). Functionally, part of the ABC transporter complex CcmAB involved in the biogenesis of c-type cytochromes; once thought to export heme, this seems not to be the case, but its exact role is uncertain. Responsible for energy coupling to the transport system. This Salmonella paratyphi A (strain ATCC 9150 / SARB42) protein is Cytochrome c biogenesis ATP-binding export protein CcmA 2.